Here is a 346-residue protein sequence, read N- to C-terminus: MSDADRLITPEKRGEDIDTTLRPQSLDDFTGQAEARANLKVFIEAAKNRGEALDHVLFVGPPGLGKTTLAQIMAKELGVNFKSTSGPVIAKAGDLAALLTNLEERDVLFIDEIHRLNPAVEEILYPAMEDFQLDLIIGEGPAARSVKIDLSKFTLVAATTRLGLLTTPLRDRFGIPVRLAFYTVDELELIVRRGARLMGLNMTDGGAREIARRARGTPRIAGRLLRRVRDFAEVARAEAVTREIADEALTRLLVDNMGLDQLDMRYLTMIAVNFGGGPVGIETIAAGLSEPRDAIEDIIEPYMIQQGFIQRTPRGRILTATAWKHLGLQPPKDLEAAQFRLTLEDD.

Basic and acidic residues predominate over residues 1–16 (MSDADRLITPEKRGED). Residues 1–23 (MSDADRLITPEKRGEDIDTTLRP) form a disordered region. Residues 1–182 (MSDADRLITP…FGIPVRLAFY (182 aa)) are large ATPase domain (RuvB-L). Residues Leu-21, Arg-22, Gly-63, Lys-66, Thr-67, Thr-68, 129-131 (EDF), Arg-172, Tyr-182, and Arg-219 contribute to the ATP site. Residue Thr-67 participates in Mg(2+) binding. The tract at residues 183–253 (TVDELELIVR…IADEALTRLL (71 aa)) is small ATPAse domain (RuvB-S). The interval 256-346 (NMGLDQLDMR…AQFRLTLEDD (91 aa)) is head domain (RuvB-H). The DNA site is built by Arg-292, Arg-311, and Arg-316.

The protein belongs to the RuvB family. As to quaternary structure, homohexamer. Forms an RuvA(8)-RuvB(12)-Holliday junction (HJ) complex. HJ DNA is sandwiched between 2 RuvA tetramers; dsDNA enters through RuvA and exits via RuvB. An RuvB hexamer assembles on each DNA strand where it exits the tetramer. Each RuvB hexamer is contacted by two RuvA subunits (via domain III) on 2 adjacent RuvB subunits; this complex drives branch migration. In the full resolvosome a probable DNA-RuvA(4)-RuvB(12)-RuvC(2) complex forms which resolves the HJ.

The protein localises to the cytoplasm. The catalysed reaction is ATP + H2O = ADP + phosphate + H(+). Functionally, the RuvA-RuvB-RuvC complex processes Holliday junction (HJ) DNA during genetic recombination and DNA repair, while the RuvA-RuvB complex plays an important role in the rescue of blocked DNA replication forks via replication fork reversal (RFR). RuvA specifically binds to HJ cruciform DNA, conferring on it an open structure. The RuvB hexamer acts as an ATP-dependent pump, pulling dsDNA into and through the RuvAB complex. RuvB forms 2 homohexamers on either side of HJ DNA bound by 1 or 2 RuvA tetramers; 4 subunits per hexamer contact DNA at a time. Coordinated motions by a converter formed by DNA-disengaged RuvB subunits stimulates ATP hydrolysis and nucleotide exchange. Immobilization of the converter enables RuvB to convert the ATP-contained energy into a lever motion, pulling 2 nucleotides of DNA out of the RuvA tetramer per ATP hydrolyzed, thus driving DNA branch migration. The RuvB motors rotate together with the DNA substrate, which together with the progressing nucleotide cycle form the mechanistic basis for DNA recombination by continuous HJ branch migration. Branch migration allows RuvC to scan DNA until it finds its consensus sequence, where it cleaves and resolves cruciform DNA. The polypeptide is Holliday junction branch migration complex subunit RuvB (Agrobacterium fabrum (strain C58 / ATCC 33970) (Agrobacterium tumefaciens (strain C58))).